The primary structure comprises 4074 residues: MIVWLISLMSIEILLLAGPALSFHIEPKEGSLAGGTWITVIFDGLELEQLYPTNGSQLEIHLVNVAVPALPSIPCDVSPVFLDLPVVMCRTRSLLPEVHEGLYYLEAHAGGQVVGSPSPGLQDCCTFKFSREQTPIVYQVTPPSGVPGKMIHVYGWIITGRSETFDFDAEYIDSPLILEAQGDKWVTACSLINRQTGSCYPLQENHGLGTLQCRVEGNYIGSQNVSFSVFNKGKSMVHKNAWLVSAKLDLFLYQTYSEILSVFPETGSLGGKTDIIITGDFFDNPALVTIAGVPCDIRHMSPRKIECTTRAPGKRARLTAPQAGNRGLLFEVGEAVEGLDLTVATPGYRWQIVPNASSPFGFWFKEGQPFRARLSGFFVAPETNNYTFWIQADNQASLYFSQSEDPRMKVKVASIRVGTADWFDAWEQDRNEGVWQRKTPKLELVGGTRYYLEAEHYGRTPSRGMRIGVQIHNTWLNPDVVSTYLREKHQIRVRAQRLPEIQMLTVSGRGSFFLTWDNVTSQPIPENATAHQIQTAIEELLAVKCKLEPLSANILLWLGFEQGPEGSSFEGDLTSGTEPFCGRFSLHQPRRLVLTPPAAQKDYWLDRYTHLCIAYKGRMKNILKVTVFFTTDFQNFIKKNITCDWNLVGTRPNSWQFTCTDLWETCVHHSMYLQPPLVDSPVLVHRIDLFPLSQETSGFYVDEIIIADTNITVSQADSETAHPGGNLVESLCVVGSPPVYNISFWLVGCGQELPLITASIVPTGGEARRSGLVQVTTQRIQKTSPPLGGYFHIQLPTSVIPDVPVHISASHLRKLLQNNADNFTSRYLNSSDLTVMEDLKSCYEHEWTLSWSSQVGDLPNFIRVSDANLTGVNPAATVRVVYDGGVFLGPVFGDMLVTANQHTQVVVRVNDIPAHCSGSCSFQYLEGSTPQIHSAWYSLDGDISLLIYIFGINFSGDPQALEIMVNKTNCKVIFSNQTNVICQTDLLPVGMHRLFMVVRPFGRAINTSGEALFLSVEPRLDAVEPSRAAEIGGLWATIQGSGLEDVSLVLFGSQSCAINITTSNSRRIQCRVPPRGKDGPVVNLTVVSGDHSAVLPMAFTYVSSLNPVITSLSRNRSNIAGGDTLFIRMALLVNYTDLDVEVCIQNTLAPAHVQMPQGLEVVLPPLPAGLYSISVSINGISIRSPGVDLHIQYITEVFSIEPCCGSLLGGTILSISGIGFIRDPTLVWVFVGNRSCDILNSTETVIWCETPPAALLPDSNIPAIPVPMEIWAGNVSFARESLLNLSFTFLYEAAMTPVVTAMRGEIINNSLRFYVEGNNLSNSVILLGVSHCDLETQTLRNNVSLSGCSFPLHSLEAGFYPLQVRQKQMGFANMSAVPQQYVITPWIMAISPTHGSACGGTVLTVRGLALSSRKRSVQVDLLGPFTCVILSLGHQTILCQINKVNDSFPDVSFTLNVTVIVNGLPSECQGNCTLFLQEETTPIVDSLTTNISGSLTMVLIRGRKLGITAVEPMVFVDDHLPCIVTFFNASYVICWISDLTPGLHYVSVFHARNGYACFGNVSRHFYILPQVFHYFPKNFSIHGGSLLTVEGTALRGKNSTLVYVGQQACLTVSISTELIQCIVPAGNGSVGLVIEVDGLSYQMGVIGYSSAFTPRLLSISQTDDVLTFAVAQVSGAENVDIFIGMSPCVGISGNHTVLQCVVSSLPAGEYPVRGYDRMRGWASSVLVFTSTATISGVTENFGCLGGRLVHVFGAGFSPGNVSAAVCGAPCQVLANATVSAFSCLVLPLNVSLAFLCGLKHSEESCEASSSTYVQCDLTVTVGTETLPQSWPYLYICEESPQCLFAPDHWTESTFPWFSGLFISPKVERDEVLIYNSSCNIAMETEAKMECETPNQPITAKITEIRKSRGQSTQGNFSLQFCLRWSRTHSWFPERVPQDGDNVTVENGQLLLLDTNTSILNLLHIKGGKLIFMDPGPIELRAHAILISDGGELRIGSEDKPFQGKAEIKLYGSSHSTPFFPYGVKFLAVRNGTLSLHGLLPEVTFTHLQAAAYAGDTVLALEDAVDWHPGDEAVIISRIGVGGAKPMEEIVIVEAVHNTDLYLRSPLRYSHNFTENWVAGVLHILKVTVVLLSRSITIQGNLTAERMKHLASCQEASDSEGNLQDCLYSKSEKMLGSRDLGARVIVQSFPEEPSRVQLRGVQFRDLGQAFRKHVSALTLVGAMRDSYVQGCTVWSSFNRGLSMSMTLGLKVDSNIFYNILGHALLVGTDMDIKYISWEAAPEKKPDWSEQGNIIRNNVIISISGTEGLSSPEMLTPSGIYILNPTNVVEGNRVYVAGLGYFFHLVTSQTSQAPLLSFTQNIAHSCTRYGLFIYPQFQPPWDDGRGPTLFQNFTVWGSAGGARISRSSNLHLKNFQVYSCRDFGIDILESDANTSVTDSLLLGHFAHKGSLCMSAGIKTPKRWELIISNTTFVNFDLTDCVSIRTCSGCSRGQGGFTVKTNQLKFINSPNLVAFPFPHAAILEDLDGSLSGRNRSHILASMETLSASCLVNLSFSQIVPGSVCGEDVIFHHMSIGLANAPNVSYDLTITDSRNKTTTVNYVRDTLSNLYGWMALLLDQETYSLQFETPWISRSLQYSATFGSFAPGNYLLLVHTVLWPYPDILVRCGSQEGRSLPSLPLPGQDQGCDWFFNTQLRQLIYLVSGEGQVQVTLQVKEGVPPTISASTSAPESALKWSLPEAWTGIEEGWGGHNHTIPGPGDDILILPNRTVLVDTNLPFLKGLYVMGTLEFPVDRSNVLSVACMVIAGGELKVGTLDNPLEKEQKLLILLRASEGIFCDRLNGIHIDPGTIGVYGKVQLHGACPKKSWTRLAADIASGNERIIVEDAVDWRPHDKIVLSSSSYEPHEAEILTVKEVQAHHVKIYERLKYRHIGSVHVMEDGRCIRLAAEVGLLTRNIQIQPDISCRARLLVGSFRNSSSKEFSGVLQLSNVEIQNFGSPLYSSIEFTNASAGSWIISSSLHQSCSGGIRAAASHGIILNDNIVFGTVGHGIDLEGQNFSLSNNLVVLMTQSAWSTVWVAGIKANQAKDINLYGNVVAGSERIGFHIQGHRCSSPEARWSDNVAHSSLHGLHLYKENGLDNCTGISGFLAFKNFDYGAMLHVENSVEIENITLVDNSIGLLATVYVSSVPKSHIENVQIVLRNSVIIATSSSFDCIQDRVKPRSANLTSSDRAPSNPRGGRVGILWPIFTSEPNWWPQEPWHRVRNGHSTSGILKLQDVTFSNFVKSCYSDDLDICILPNVENTGIMHPIMAEGTRMLKIKDKNKFYFPPLQARKGLGILVCPESDCENPRKYLFKDLDGRALGLPPPVSVFPKTEAEWTGSFFNTGTFREEQKCTYRALIQGYICKQSDQAILILDNADATWAMQKLYPVVSVTRGFVDTFSSVNADAPCSTSGSASTFYSILPTREITKICFVDQTPQVLRFFLLGNRSTSKLLLAVFYHELQNPRVFIGESFIPPIMVQSTSSLLDESIGSNYFSILDNLLYVVLQGQEPIEIHSGVSIHLALTVMFSVLEKGWEIIILERLTDFLQVSQDQIRFIHEMPGNEATLKAIADNKAKRKRNCPTVTCASPYRVGQRRPLMTEMSSYRVPSPTIMETASKVIVIEIGDLPTIRSTRLISYLTSNKLQNLAHQIITAQQTGVLENVLNMTIGALLVTQPKGVTDYGNASSFKTGNFIYIRPYALSVLVQPSDGEVGKELTVQPRLVFLDKQNQRIESLGPPSEPWAISVSLEGTSDPVLKGCTQAESQDGYVSFSNLAVLISGSNWHFIFTVTSPPGANFTARSRSFTVLPAAPSEKSSIILAVSLCSVASWLALCCLVCCWFRKSKSRKIKSEDISEFKTNDQKSHIHMSSKHPRSQETKKEDTMMGEDMKIKVIMDKVNQLPHQSLNGVSRRKVSRRAVREEGSSREEDVVPAPRIISITSQGHTCVPGSPDQQIYLQEAGNWKEAQEQLVSYQLAGQDQRLLLCPDLRRERQQLQGQSQLGQEGGSVGLSQEKKASGGATQASCPHLVHPETIQEQL.

An N-terminal signal peptide occupies residues 1 to 22 (MIVWLISLMSIEILLLAGPALS). 2 N-linked (GlcNAc...) asparagine glycosylation sites follow: Asn-54 and Asn-224. The region spanning 258-310 (EILSVFPETGSLGGKTDIIITGDFFDNPALVTIAGVPCDIRHMSPRKIECTTR) is the IPT/TIG 1 domain. The PA14 domain maps to 323 to 483 (AGNRGLLFEV…TWLNPDVVST (161 aa)). 46 N-linked (GlcNAc...) asparagine glycosylation sites follow: Asn-355, Asn-385, Asn-518, Asn-527, Asn-640, Asn-710, Asn-741, Asn-822, Asn-829, Asn-868, Asn-953, Asn-966, Asn-976, Asn-1006, Asn-1059, Asn-1083, Asn-1115, Asn-1134, Asn-1233, Asn-1240, Asn-1274, Asn-1284, Asn-1308, Asn-1319, Asn-1342, Asn-1373, Asn-1445, Asn-1456, Asn-1471, Asn-1490, Asn-1528, Asn-1560, Asn-1578, Asn-1598, Asn-1627, Asn-1694, Asn-1760, Asn-1775, Asn-1789, Asn-1875, Asn-1915, Asn-1941, Asn-1955, Asn-2030, Asn-2111, and Asn-2140. The IPT/TIG 2 domain maps to 944 to 1000 (SLLIYIFGINFSGDPQALEIMVNKTNCKVIFSNQTNVICQTDLLPVGMHRLFMVVRP). 3 consecutive IPT/TIG domains span residues 1018-1101 (PRLD…AFTY), 1107-1186 (PVIT…RSPG), and 1199-1274 (SIEP…WAGN). Residues 1385-1464 (PWIMAISPTH…LNVTVIVNGL (80 aa)) enclose the IPT/TIG 6 domain. Residues 1573-1641 (HYFPKNFSIH…LVIEVDGLSY (69 aa)) form the IPT/TIG 7 domain. A G8 1 domain is found at 1928 to 2049 (HSWFPERVPQ…PEVTFTHLQA (122 aa)). PbH1 repeat units lie at residues 2245–2267 (TLGLKVDSNIFYNILGHALLVGT), 2288–2322 (EQGNIIRNNVIISISGTEGLSSPEMLTPSGIYILN), 2351–2373 (APLLSFTQNIAHSCTRYGLFIYP), 2383–2404 (RGPTLFQNFTVWGSAGGARISR), and 2405–2427 (SSNLHLKNFQVYSCRDFGIDILE). The N-linked (GlcNAc...) asparagine glycan is linked to Asn-2390. N-linked (GlcNAc...) asparagine glycosylation is found at Asn-2431, Asn-2467, Asn-2531, Asn-2549, Asn-2579, Asn-2591, Asn-2749, Asn-2764, Asn-2972, and Asn-3004. The stretch at 2460–2483 (RWELIISNTTFVNFDLTDCVSIRT) is one PbH1 6 repeat. Positions 2743-2869 (EGWGGHNHTI…PKKSWTRLAA (127 aa)) constitute a G8 2 domain. The stretch at 3029–3051 (SHGIILNDNIVFGTVGHGIDLEG) is one PbH1 7 repeat. Asn-3053 carries N-linked (GlcNAc...) asparagine glycosylation. The PbH1 8 repeat unit spans residues 3082 to 3104 (AKDINLYGNVVAGSERIGFHIQG). N-linked (GlcNAc...) asparagine glycans are attached at residues Asn-3136, Asn-3165, Asn-3221, Asn-3484, Asn-3702, Asn-3721, and Asn-3833. The PbH1 9 repeat unit spans residues 3158–3183 (ENSVEIENITLVDNSIGLLATVYVSS). The chain crosses the membrane as a helical span at residues 3854 to 3874 (IILAVSLCSVASWLALCCLVC). Positions 3871-3888 (CLVCCWFRKSKSRKIKSE) are ciliary targeting sequence (CST). 3 disordered regions span residues 3896–3919 (NDQKSHIHMSSKHPRSQETKKEDT), 3943–3965 (NGVSRRKVSRRAVREEGSSREED), and 4031–4074 (LQGQ…QEQL). Basic and acidic residues-rich tracts occupy residues 3910 to 3919 (RSQETKKEDT) and 3954 to 3965 (AVREEGSSREED). Positions 3947–3976 (RRKVSRRAVREEGSSREEDVVPAPRIISIT) are nuclear localization signal (NLS).

In terms of assembly, interacts with CAMLG. Interacts with PKD2. Interacts (via CST) with ARF4; this interaction allows an efficient PKHD1 trafficking to the cilium. Interacts (via CST) with RAB8A; this interaction controls trafficking through the endomembrane systeme and to the cilium. Interacts (via CST) with TULP3; this interaction allows PKHD1 trafficking to the cilium. In terms of processing, palmitoylated. Palmitoylation facilitates the trafficking to the cilia and membrane targeting. Post-translationally, N-glycosylated. Several proteolytic cleavages occur within the extracellular domain, whereas at least one cleavage occurs within the cytoplasmic domain. Cleaved by a probable proprotein convertase which produces an extracellular domain (polyductin extracellular domain, (PECD)) and a C-terminal fragment (polyductin transmembrane fragment (PTM)) which are tethered together by disulfide bonds. This extracellular domain (PECD) is then shed from the primary cilium by activation of a member of the ADAM metalloproteinase disintegrins family, resulting in concomitant release of an intra-cellular C-terminal fragment (ICD) via a gamma-secretase-dependent process. The proteolytic cleavage of the C-terminal intracellular fragment (ICD) is controlled by cytosolic calcium concentration and activation of PKC.

The protein resides in the cell membrane. Its subcellular location is the cytoplasm. The protein localises to the apical cell membrane. It localises to the cytoskeleton. It is found in the cilium basal body. The protein resides in the cell projection. Its subcellular location is the cilium. The protein localises to the spindle. It localises to the chromosome. It is found in the centromere. The protein resides in the nucleus. Its subcellular location is the secreted. The protein localises to the extracellular exosome. It localises to the endoplasmic reticulum. It is found in the golgi apparatus. Promotes ciliogenesis in renal epithelial cells and therefore participates in the tubules formation and/ or ensures the maintenance of the architecture of the lumen of the kidney. Has an impact on cellular symmetry by ensuring correct bipolar cell division through the regulation of centrosome duplication and mitotic spindle assembly and by maintaining oriented cell division (OCD) during tubular elongation through planar cell polarity (PCP) pathway. During epithelial cell morphogenesis, it also regulates cell-cell and cell-matrix adhesion and participates in cell motility. Promotes cell-cell contact through the positive regulation of PTK2 kinase activity leading to either positive regulation of epithelial cell proliferation through the HRAS/RAF1 pathways, or negative regulation of apoptosis through the PDK1/AKT1 pathway. May act in collecting-duct and biliary differentiation. May participate in the regulation of the cholangiocytes proliferation and the CCN2 production in an CXCL8-dependent manner. The sequence is that of Fibrocystin from Canis lupus familiaris (Dog).